Consider the following 428-residue polypeptide: MLDIQFIREHTDIVKESQRKRGESVELVDEVLSSDTARREALKAFEEARAQQKEIGKKVASAPADEKAKLIAETKELSQKVSEYKSKADSAAEEYTTAMWKLSNIVEPEAPEGGEDDYVVVKKVGQIRDFAAEGFEPKDHLTLGTGVAGIDMRRGVKVGGSRFYFLRGQVARMQIAMLTMAVDQAEEHGFTLAITPTLVRPEVMRGTGFLNSHADEIYRLREPDDQYLVGTSEVALAGMHENEILDLGNGPLRYCGWSSCYRREAGAAGKDTSGIIRVHQFDKVEMFVYAKQEDSYKEHEHLLAMEQEMLAKVEVPYRIIDTAAGDLGSSAARKFDCEAWVPTQGRYRELTSTSNCTEYQARRLNIRERMEDGGTRPVSTLNGTLATTRWLVAIMENHQQKDGSIEIPKAMRAYMGGKEVIEPTKWEA.

231–233 serves as a coordination point for L-serine; the sequence is TSE. ATP-binding positions include 262–264 and V278; that span reads RRE. E285 lines the L-serine pocket. 349–352 lines the ATP pocket; it reads ELTS. T384 is an L-serine binding site.

The protein belongs to the class-II aminoacyl-tRNA synthetase family. Type-1 seryl-tRNA synthetase subfamily. As to quaternary structure, homodimer. The tRNA molecule binds across the dimer.

The protein localises to the cytoplasm. It catalyses the reaction tRNA(Ser) + L-serine + ATP = L-seryl-tRNA(Ser) + AMP + diphosphate + H(+). It carries out the reaction tRNA(Sec) + L-serine + ATP = L-seryl-tRNA(Sec) + AMP + diphosphate + H(+). The protein operates within aminoacyl-tRNA biosynthesis; selenocysteinyl-tRNA(Sec) biosynthesis; L-seryl-tRNA(Sec) from L-serine and tRNA(Sec): step 1/1. Catalyzes the attachment of serine to tRNA(Ser). Is also able to aminoacylate tRNA(Sec) with serine, to form the misacylated tRNA L-seryl-tRNA(Sec), which will be further converted into selenocysteinyl-tRNA(Sec). This chain is Serine--tRNA ligase, found in Bifidobacterium longum (strain NCC 2705).